We begin with the raw amino-acid sequence, 424 residues long: Kynurenine--oxoglutarate transaminase 1 (424 aa).

Gly-36 is a binding site for substrate. N6-succinyllysine is present on Lys-82. Asn-185 provides a ligand contact to substrate. An N6-(pyridoxal phosphate)lysine modification is found at Lys-247. Arg-398 provides a ligand contact to substrate. Residue Lys-413 is modified to N6-succinyllysine.

Belongs to the class-I pyridoxal-phosphate-dependent aminotransferase family. As to quaternary structure, homodimer. Pyridoxal 5'-phosphate serves as cofactor.

Its subcellular location is the cytoplasm. It localises to the cytosol. The catalysed reaction is L-kynurenine + 2-oxoglutarate = kynurenate + L-glutamate + H2O. It catalyses the reaction 3-phenylpyruvate + L-glutamine = 2-oxoglutaramate + L-phenylalanine. The enzyme catalyses an S-substituted L-cysteine + H2O = a thiol + pyruvate + NH4(+). It functions in the pathway amino-acid degradation; L-kynurenine degradation; kynurenate from L-kynurenine: step 1/2. In terms of biological role, catalyzes the irreversible transamination of the L-tryptophan metabolite L-kynurenine to form kynurenic acid (KA), an intermediate in the tryptophan catabolic pathway which is also a broad spectrum antagonist of the three ionotropic excitatory amino acid receptors among others. Metabolizes the cysteine conjugates of certain halogenated alkenes and alkanes to form reactive metabolites. Catalyzes the beta-elimination of S-conjugates and Se-conjugates of L-(seleno)cysteine, resulting in the cleavage of the C-S or C-Se bond. This Mus musculus (Mouse) protein is Kynurenine--oxoglutarate transaminase 1 (Kyat1).